Here is a 394-residue protein sequence, read N- to C-terminus: NAD(P)H-quinone oxidoreductase subunit H (394 aa).

The protein belongs to the complex I 49 kDa subunit family. In terms of assembly, NDH-1 can be composed of about 15 different subunits; different subcomplexes with different compositions have been identified which probably have different functions.

It localises to the cellular thylakoid membrane. The enzyme catalyses a plastoquinone + NADH + (n+1) H(+)(in) = a plastoquinol + NAD(+) + n H(+)(out). The catalysed reaction is a plastoquinone + NADPH + (n+1) H(+)(in) = a plastoquinol + NADP(+) + n H(+)(out). In terms of biological role, NDH-1 shuttles electrons from an unknown electron donor, via FMN and iron-sulfur (Fe-S) centers, to quinones in the respiratory and/or the photosynthetic chain. The immediate electron acceptor for the enzyme in this species is believed to be plastoquinone. Couples the redox reaction to proton translocation, and thus conserves the redox energy in a proton gradient. Cyanobacterial NDH-1 also plays a role in inorganic carbon-concentration. The polypeptide is NAD(P)H-quinone oxidoreductase subunit H (Synechococcus sp. (strain CC9605)).